Consider the following 500-residue polypeptide: Maintenance of mitochondrial morphology protein 1 (500 aa).

The Lumenal portion of the chain corresponds to methionine 1–glycine 42. The chain crosses the membrane as a helical span at residues phenylalanine 43–phenylalanine 63. Residues glycine 64–arginine 500 lie on the Cytoplasmic side of the membrane. Residues glutamine 141–proline 375 enclose the SMP-LTD domain. Low complexity-rich tracts occupy residues serine 283–proline 294 and asparagine 302–threonine 316. Disordered regions lie at residues serine 283–threonine 316 and glutamate 406–arginine 500. A compositionally biased stretch (acidic residues) spans glutamate 406–glycine 415. Residues glutamate 438–arginine 471 show a composition bias toward basic and acidic residues.

This sequence belongs to the MMM1 family. As to quaternary structure, homodimer. Component of the ER-mitochondria encounter structure (ERMES) or MDM complex, composed of MMM1, MDM10, MDM12 and MDM34. An MMM1 homodimer associates with one molecule of MDM12 on each side in a pairwise head-to-tail manner, and the SMP-LTD domains of MMM1 and MDM12 generate a continuous hydrophobic tunnel for phospholipid trafficking.

It localises to the endoplasmic reticulum membrane. Functionally, component of the ERMES/MDM complex, which serves as a molecular tether to connect the endoplasmic reticulum (ER) and mitochondria. Components of this complex are involved in the control of mitochondrial shape and protein biogenesis, and function in nonvesicular lipid trafficking between the ER and mitochondria. The MDM12-MMM1 subcomplex functions in the major beta-barrel assembly pathway that is responsible for biogenesis of all outer membrane beta-barrel proteins, and acts in a late step after the SAM complex. The MDM10-MDM12-MMM1 subcomplex further acts in the TOM40-specific pathway after the action of the MDM12-MMM1 complex. Essential for establishing and maintaining the structure of mitochondria and maintenance of mtDNA nucleoids. The chain is Maintenance of mitochondrial morphology protein 1 from Phaeosphaeria nodorum (strain SN15 / ATCC MYA-4574 / FGSC 10173) (Glume blotch fungus).